The following is a 1465-amino-acid chain: DNA polymerase III PolC-type (1465 aa).

The Exonuclease domain maps to 427 to 583 (YVVFDVETTG…YDAEATGRLL (157 aa)).

Belongs to the DNA polymerase type-C family. PolC subfamily.

Its subcellular location is the cytoplasm. The enzyme catalyses DNA(n) + a 2'-deoxyribonucleoside 5'-triphosphate = DNA(n+1) + diphosphate. Required for replicative DNA synthesis. This DNA polymerase also exhibits 3' to 5' exonuclease activity. The sequence is that of DNA polymerase III PolC-type from Streptococcus pyogenes serotype M4 (strain MGAS10750).